Here is a 152-residue protein sequence, read N- to C-terminus: Transcriptional repressor NrdR (152 aa).

A zinc finger lies at 3 to 34 (CPYCNASETKVIDSRLAAEGAQVRRRRSCNSC). Residues 49–139 (PRIIKSSGKI…VYRDFQDIDA (91 aa)) form the ATP-cone domain.

The protein belongs to the NrdR family. Zn(2+) serves as cofactor.

In terms of biological role, negatively regulates transcription of bacterial ribonucleotide reductase nrd genes and operons by binding to NrdR-boxes. This chain is Transcriptional repressor NrdR, found in Psychrobacter cryohalolentis (strain ATCC BAA-1226 / DSM 17306 / VKM B-2378 / K5).